A 235-amino-acid chain; its full sequence is NAD(P)H-hydrate epimerase (235 aa).

Residues 12–218 form the YjeF N-terminal domain; that stretch reads AIVMDQLLMG…EFLKETNLTI (207 aa). 62-66 contacts (6S)-NADPHX; the sequence is NNGGD. K(+) contacts are provided by Asn-63 and Asp-127. (6S)-NADPHX is bound by residues 131 to 137 and Asp-161; that span reads GYSFKGD. K(+) is bound at residue Ser-164.

It belongs to the NnrE/AIBP family. The cofactor is K(+).

It carries out the reaction (6R)-NADHX = (6S)-NADHX. The catalysed reaction is (6R)-NADPHX = (6S)-NADPHX. Functionally, catalyzes the epimerization of the S- and R-forms of NAD(P)HX, a damaged form of NAD(P)H that is a result of enzymatic or heat-dependent hydration. This is a prerequisite for the S-specific NAD(P)H-hydrate dehydratase to allow the repair of both epimers of NAD(P)HX. The chain is NAD(P)H-hydrate epimerase from Dictyostelium discoideum (Social amoeba).